We begin with the raw amino-acid sequence, 308 residues long: uncharacterized protein (308 aa).

This is an uncharacterized protein from Escherichia coli (strain K12).